The primary structure comprises 346 residues: 3-dehydroquinate synthase (346 aa).

NAD(+)-binding positions include 62–67 (DGEQYK), 96–100 (GVISD), 120–121 (TT), Lys-133, and Lys-142. Zn(2+) contacts are provided by Glu-175, His-234, and His-251.

This sequence belongs to the sugar phosphate cyclases superfamily. Dehydroquinate synthase family. Co(2+) serves as cofactor. The cofactor is Zn(2+). NAD(+) is required as a cofactor.

Its subcellular location is the cytoplasm. The catalysed reaction is 7-phospho-2-dehydro-3-deoxy-D-arabino-heptonate = 3-dehydroquinate + phosphate. It participates in metabolic intermediate biosynthesis; chorismate biosynthesis; chorismate from D-erythrose 4-phosphate and phosphoenolpyruvate: step 2/7. Functionally, catalyzes the conversion of 3-deoxy-D-arabino-heptulosonate 7-phosphate (DAHP) to dehydroquinate (DHQ). This Campylobacter fetus subsp. fetus (strain 82-40) protein is 3-dehydroquinate synthase.